The sequence spans 243 residues: uncharacterized protein (243 aa).

Transmembrane regions (helical) follow at residues 38–58, 99–119, 143–163, and 204–224; these read AYFL…VGIF, FGIA…FLGY, FYFS…FLVL, and AFAT…LGLF.

Its subcellular location is the cell membrane. This is an uncharacterized protein from Mycoplasma pneumoniae (strain ATCC 29342 / M129 / Subtype 1) (Mycoplasmoides pneumoniae).